The following is a 210-amino-acid chain: Outer-membrane lipoprotein LolB (210 aa).

Residues 1-18 (MKKFTKILSLSTLLFLAG) form the signal peptide. Cys19 is lipidated: N-palmitoyl cysteine. A lipid anchor (S-diacylglycerol cysteine) is attached at Cys19.

It belongs to the LolB family. As to quaternary structure, monomer.

Its subcellular location is the cell outer membrane. Functionally, plays a critical role in the incorporation of lipoproteins in the outer membrane after they are released by the LolA protein. In Actinobacillus pleuropneumoniae serotype 7 (strain AP76), this protein is Outer-membrane lipoprotein LolB.